The primary structure comprises 453 residues: Serine--tRNA ligase (453 aa).

An L-serine-binding site is contributed by 252–254 (TAE). ATP contacts are provided by residues 283–285 (RKE) and V299. E306 is an L-serine binding site. 370–373 (EMVS) contacts ATP. T405 is a binding site for L-serine.

It belongs to the class-II aminoacyl-tRNA synthetase family. Type-1 seryl-tRNA synthetase subfamily. Homodimer. The tRNA molecule binds across the dimer.

The protein resides in the cytoplasm. It catalyses the reaction tRNA(Ser) + L-serine + ATP = L-seryl-tRNA(Ser) + AMP + diphosphate + H(+). The enzyme catalyses tRNA(Sec) + L-serine + ATP = L-seryl-tRNA(Sec) + AMP + diphosphate + H(+). Its pathway is aminoacyl-tRNA biosynthesis; selenocysteinyl-tRNA(Sec) biosynthesis; L-seryl-tRNA(Sec) from L-serine and tRNA(Sec): step 1/1. Its function is as follows. Catalyzes the attachment of serine to tRNA(Ser). Is also able to aminoacylate tRNA(Sec) with serine, to form the misacylated tRNA L-seryl-tRNA(Sec), which will be further converted into selenocysteinyl-tRNA(Sec). This is Serine--tRNA ligase from Sulfurisphaera tokodaii (strain DSM 16993 / JCM 10545 / NBRC 100140 / 7) (Sulfolobus tokodaii).